Here is a 561-residue protein sequence, read N- to C-terminus: Protein NRT1/ PTR FAMILY 5.13 (561 aa).

A helical membrane pass occupies residues 78-98; that stretch reads AWSGISTILPLLGAFVADAFL. Thr103 carries the phosphothreonine modification. 10 helical membrane-spanning segments follow: residues 104–124, 133–153, 183–203, 211–231, 324–344, 361–381, 405–425, 447–467, 486–506, and 530–550; these read IIIA…SAFL, SSPS…VAIG, FFNW…LVVV, WALG…LFVL, IPVW…MTFF, IPPA…VPIY, IGTG…VESK, IWWL…TLVG, AIYL…IYLI, and YFYW…LFIS.

Belongs to the major facilitator superfamily. Proton-dependent oligopeptide transporter (POT/PTR) (TC 2.A.17) family. Expressed in roots, flowers and siliques. Detected in stems and leaves.

Its subcellular location is the membrane. The sequence is that of Protein NRT1/ PTR FAMILY 5.13 (NPF5.13) from Arabidopsis thaliana (Mouse-ear cress).